A 366-amino-acid polypeptide reads, in one-letter code: Galactoside alpha-(1,2)-fucosyltransferase 1 (366 aa).

Over 1–8 the chain is Cytoplasmic; the sequence is MWPRSHRH. Residues 9-25 form a helical; Signal-anchor for type II membrane protein membrane-spanning segment; the sequence is LCLAFLLVCVLSAISFL. The Lumenal segment spans residues 26-366; sequence IHFHQDSIRH…LSPLWPLAEP (341 aa). N-linked (GlcNAc...) asparagine glycans are attached at residues Asn66, Asn302, and Asn328.

This sequence belongs to the glycosyltransferase 11 family.

The protein resides in the golgi apparatus. It localises to the golgi stack membrane. It carries out the reaction a beta-D-galactosyl-(1-&gt;4)-N-acetyl-beta-D-glucosaminyl derivative + GDP-beta-L-fucose = an alpha-L-Fuc-(1-&gt;2)-beta-D-Gal-(1-&gt;4)-beta-D-GlcNAc derivative + GDP + H(+). The catalysed reaction is a ganglioside GA1 + GDP-beta-L-fucose = a ganglioside Fuc-GA1 + GDP + H(+). It catalyses the reaction a beta-D-Gal-(1-&gt;3)-beta-D-GlcNAc-(1-&gt;3)-beta-D-Gal-(1-&gt;4)-beta-D-Glc-(1&lt;-&gt;1')-Cer(d18:1(4E)) + GDP-beta-L-fucose = alpha-L-fucosyl-(1-&gt;2)- beta-D-galactosyl-(1-&gt;3)-N-acetyl-beta-D-glucosaminyl-(1-&gt;3)-beta-D-galactosyl-(1-&gt;4)-beta-D-glucosyl-(1&lt;-&gt;1')-N-acylsphing-4-enine + GDP + H(+). The enzyme catalyses a neolactoside nLc4Cer(d18:1(4E)) + GDP-beta-L-fucose = a neolactoside IV(2)-alpha-Fuc-nLc4Cer(d18:1(4E)) + GDP + H(+). It carries out the reaction a ganglioside GM1 + GDP-beta-L-fucose = a ganglioside Fuc-GM1 + GDP + H(+). The catalysed reaction is beta-D-galactosyl-(1-&gt;3)-N-acetyl-D-galactosamine + GDP-beta-L-fucose = alpha-L-fucosyl-(1-&gt;2)-beta-D-galactosyl-(1-&gt;3)-N-acetyl-D-galactosamine + GDP + H(+). Its pathway is protein modification; protein glycosylation. Functionally, catalyzes the transfer of L-fucose, from a guanosine diphosphate-beta-L-fucose, to the terminal galactose residue of glycoconjugates through an alpha(1,2) linkage leading to H antigen synthesis that is an intermediate substrate in the synthesis of ABO blood group antigens. H antigen is essential for maturation of the glomerular layer of the main olfactory bulb, in cell migration and early cell-cell contacts during tumor associated angiogenesis. Preferentially fucosylates soluble lactose and to a lesser extent fucosylates glycolipids gangliosides GA1 and GM1a. The polypeptide is Galactoside alpha-(1,2)-fucosyltransferase 1 (Saimiri boliviensis boliviensis (Bolivian squirrel monkey)).